The chain runs to 873 residues: Bifunctional heparan sulfate N-deacetylase/N-sulfotransferase 3 (873 aa).

Residues 1 to 13 (MSFIMKPHRHFQR) lie on the Cytoplasmic side of the membrane. A helical; Signal-anchor for type II membrane protein membrane pass occupies residues 14–34 (TLILLATFCMVSIIISAYYLY). At 35 to 873 (SGYKQESEVS…WLRQELQKVR (839 aa)) the chain is on the lumenal side. The tract at residues 36–589 (GYKQESEVSG…KRHRDIWSKE (554 aa)) is heparan sulfate N-deacetylase 3. N-linked (GlcNAc...) asparagine glycosylation is found at Asn-146, Asn-226, Asn-342, and Asn-392. A heparan sulfate N-sulfotransferase 3 region spans residues 590–873 (KTCDRLPKFL…WLRQELQKVR (284 aa)). Residue Lys-605 is the For sulfotransferase activity of the active site. A 3'-phosphoadenylyl sulfate-binding site is contributed by 605–609 (KTGTT). N-linked (GlcNAc...) asparagine glycosylation is present at Asn-658. A 3'-phosphoadenylyl sulfate-binding site is contributed by Ser-703. N-linked (GlcNAc...) asparagine glycosylation occurs at Asn-794. An intrachain disulfide couples Cys-809 to Cys-819. Position 824–828 (824–828 (KGRKY)) interacts with 3'-phosphoadenylyl sulfate.

The protein belongs to the sulfotransferase 1 family. NDST subfamily. As to quaternary structure, monomer. Strongly expressed strongly in brain. Expressed at high level at embryonic day 11 compared to other stages of development. Weakly expressed in adult heart, kidney, muscle, endothelial cells and testis but not in other tissues.

It is found in the golgi apparatus membrane. The catalysed reaction is alpha-D-glucosaminyl-[heparan sulfate](n) + 3'-phosphoadenylyl sulfate = N-sulfo-alpha-D-glucosaminyl-[heparan sulfate](n) + adenosine 3',5'-bisphosphate + 2 H(+). It functions in the pathway glycan metabolism; heparan sulfate biosynthesis. The protein operates within glycan metabolism; heparin biosynthesis. In terms of biological role, essential bifunctional enzyme that catalyzes both the N-deacetylation and the N-sulfation of glucosamine (GlcNAc) of the glycosaminoglycan in heparan sulfate. Modifies the GlcNAc-GlcA disaccharide repeating sugar backbone to make N-sulfated heparosan, a prerequisite substrate for later modifications in heparin biosynthesis. Has high deacetylase activity but low sulfotransferase activity. This chain is Bifunctional heparan sulfate N-deacetylase/N-sulfotransferase 3 (Ndst3), found in Mus musculus (Mouse).